The following is a 517-amino-acid chain: GMP synthase [glutamine-hydrolyzing] (517 aa).

The Glutamine amidotransferase type-1 domain maps to 9–199 (RILILDFGSQ…VLGICGCERL (191 aa)). Residue C86 is the Nucleophile of the active site. Residues H173 and E175 contribute to the active site. Residues 200–392 (WTSESIIEDA…LGLPYEMLYR (193 aa)) enclose the GMPS ATP-PPase domain. 227–233 (SGGVDSS) contributes to the ATP binding site.

As to quaternary structure, homodimer.

It carries out the reaction XMP + L-glutamine + ATP + H2O = GMP + L-glutamate + AMP + diphosphate + 2 H(+). It participates in purine metabolism; GMP biosynthesis; GMP from XMP (L-Gln route): step 1/1. Catalyzes the synthesis of GMP from XMP. This is GMP synthase [glutamine-hydrolyzing] from Vibrio vulnificus (strain CMCP6).